A 174-amino-acid polypeptide reads, in one-letter code: Frataxin homolog, mitochondrial (174 aa).

The transit peptide at 1–21 directs the protein to the mitochondrion; that stretch reads MIKRSLASLVRVSSVMGRRYM.

The protein belongs to the frataxin family. Monomer. Forms a 24-mer complex made up of 8 copies of a trimeric subcomplex. Increments in mitochondrial iron uptake induce stepwise assembly of species ranging from trimers to 24-mers. Interacts with ISU1 with a 1 to 1 stoichiometry; the interaction is direct. Interacts with YHB1, SDH1, SDH2, AIM45 and CIR1. Post-translationally, processed in two steps by mitochondrial processing peptidase (MPP). MPP first cleaves the precursor to intermediate form and subsequently converts the intermediate to mature size protein.

It is found in the mitochondrion matrix. It catalyses the reaction 4 Fe(2+) + O2 + 4 H(+) = 4 Fe(3+) + 2 H2O. In terms of biological role, promotes the biosynthesis of heme as well as the assembly and repair of iron-sulfur clusters by delivering Fe(2+) to proteins involved in these pathways. Plays a role in the protection against iron-catalyzed oxidative stress through its ability to catalyze the oxidation of Fe(2+) to Fe(3+). Can store large amounts of the metal in the form of a ferrihydrite mineral by oligomerization. May be involved in regulation of the mitochondrial electron transport chain. The protein is Frataxin homolog, mitochondrial of Saccharomyces cerevisiae (strain ATCC 204508 / S288c) (Baker's yeast).